Here is a 116-residue protein sequence, read N- to C-terminus: Large ribosomal subunit protein bL20 (116 aa).

The protein belongs to the bacterial ribosomal protein bL20 family.

Functionally, binds directly to 23S ribosomal RNA and is necessary for the in vitro assembly process of the 50S ribosomal subunit. It is not involved in the protein synthesizing functions of that subunit. The protein is Large ribosomal subunit protein bL20 of Helicobacter pylori (strain Shi470).